The following is a 390-amino-acid chain: Outer membrane protein assembly factor BamB (390 aa).

Residues 1–25 (MPVLRDRIPRRGFFLGLALLAALSG) form the signal peptide. Residue Cys26 is the site of N-palmitoyl cysteine attachment. Cys26 carries S-diacylglycerol cysteine lipidation.

It belongs to the BamB family. As to quaternary structure, part of the Bam complex.

The protein resides in the cell outer membrane. Part of the outer membrane protein assembly complex, which is involved in assembly and insertion of beta-barrel proteins into the outer membrane. This chain is Outer membrane protein assembly factor BamB, found in Marinobacter adhaerens (strain DSM 23420 / HP15).